A 276-amino-acid chain; its full sequence is Type II pantothenate kinase (276 aa).

8-15 contributes to the ATP binding site; the sequence is DAGGTLTK. The Proton acceptor role is filled by glutamate 76. ATP is bound by residues threonine 105, 127 to 131, phenylalanine 143, and serine 230; that span reads GGTIM.

This sequence belongs to the type II pantothenate kinase family. Homodimer.

It localises to the cytoplasm. The enzyme catalyses (R)-pantothenate + ATP = (R)-4'-phosphopantothenate + ADP + H(+). It functions in the pathway cofactor biosynthesis; coenzyme A biosynthesis; CoA from (R)-pantothenate: step 1/5. In terms of biological role, catalyzes the phosphorylation of pantothenate (Pan), the first step in CoA biosynthesis. The sequence is that of Type II pantothenate kinase from Bacillus anthracis.